We begin with the raw amino-acid sequence, 510 residues long: 3,4-dihydroxyphenylacetaldehyde synthase (510 aa).

Residue N192 is part of the active site. K303 is subject to N6-(pyridoxal phosphate)lysine.

The protein belongs to the group II decarboxylase family. It depends on pyridoxal 5'-phosphate as a cofactor.

The enzyme catalyses L-dopa + O2 + H2O + H(+) = 3,4-dihydroxyphenylacetaldehyde + H2O2 + NH4(+) + CO2. Catalyzes the decarboxylation-oxidative deamination of L-3,4-dihydroxyphenylalanine (L-DOPA) to 3,4-dihydroxylphenylacetaldehyde (DHPAA). Involved in cuticle development. Probably responsible for the protein cross-linking during the development of flexible cuticles. The chain is 3,4-dihydroxyphenylacetaldehyde synthase (amd) from Drosophila melanogaster (Fruit fly).